We begin with the raw amino-acid sequence, 333 residues long: Fructose-1,6-bisphosphatase class 1 (333 aa).

Mg(2+) contacts are provided by E92, D114, L116, and D117. Residues 117–120 (DGSS) and N209 each bind substrate. E279 is a binding site for Mg(2+).

Belongs to the FBPase class 1 family. In terms of assembly, homotetramer. Mg(2+) is required as a cofactor.

The protein resides in the cytoplasm. The enzyme catalyses beta-D-fructose 1,6-bisphosphate + H2O = beta-D-fructose 6-phosphate + phosphate. The protein operates within carbohydrate biosynthesis; gluconeogenesis. This Alkalilimnicola ehrlichii (strain ATCC BAA-1101 / DSM 17681 / MLHE-1) protein is Fructose-1,6-bisphosphatase class 1.